Here is a 260-residue protein sequence, read N- to C-terminus: Hydroxyethylthiazole kinase 2 (260 aa).

A substrate-binding site is contributed by Met-40. ATP is bound by residues Arg-116 and Thr-161. Ala-188 contributes to the substrate binding site.

It belongs to the Thz kinase family. Mg(2+) is required as a cofactor.

The catalysed reaction is 5-(2-hydroxyethyl)-4-methylthiazole + ATP = 4-methyl-5-(2-phosphooxyethyl)-thiazole + ADP + H(+). Its pathway is cofactor biosynthesis; thiamine diphosphate biosynthesis; 4-methyl-5-(2-phosphoethyl)-thiazole from 5-(2-hydroxyethyl)-4-methylthiazole: step 1/1. Functionally, catalyzes the phosphorylation of the hydroxyl group of 4-methyl-5-beta-hydroxyethylthiazole (THZ). This is Hydroxyethylthiazole kinase 2 from Oceanobacillus iheyensis (strain DSM 14371 / CIP 107618 / JCM 11309 / KCTC 3954 / HTE831).